We begin with the raw amino-acid sequence, 239 residues long: Fatty acid metabolism regulator protein (239 aa).

The 69-residue stretch at 6–74 (QSPAGFAEEY…HGKPTKVNNF (69 aa)) folds into the HTH gntR-type domain. The segment at residues 34–53 (ERELSELIGVTRTTLREVLQ) is a DNA-binding region (H-T-H motif).

In terms of assembly, homodimer.

Its subcellular location is the cytoplasm. Functionally, multifunctional regulator of fatty acid metabolism. In Klebsiella pneumoniae subsp. pneumoniae (strain ATCC 700721 / MGH 78578), this protein is Fatty acid metabolism regulator protein.